Consider the following 369-residue polypeptide: Ribonuclease 3 (369 aa).

The RNase III domain maps to 6 to 142; that stretch reads IGFVQSSINY…IIGAVAADCD (137 aa). Glutamate 46 serves as a coordination point for Mg(2+). Residue aspartate 50 is part of the active site. The Mg(2+) site is built by aspartate 128 and glutamate 131. Glutamate 131 is an active-site residue. The region spanning 272–341 is the DRBM domain; sequence NPASTLHELF…SLKLLKFIAK (70 aa).

This sequence belongs to the ribonuclease III family. In terms of assembly, homodimer. The cofactor is Mg(2+).

It localises to the cytoplasm. The enzyme catalyses Endonucleolytic cleavage to 5'-phosphomonoester.. In terms of biological role, digests double-stranded RNA. Involved in the processing of primary rRNA transcript to yield the immediate precursors to the large and small rRNAs (23S and 16S). Processes some mRNAs, and tRNAs when they are encoded in the rRNA operon. Processes pre-crRNA and tracrRNA of type II CRISPR loci if present in the organism. This is Ribonuclease 3 (rnc) from Treponema succinifaciens (strain ATCC 33096 / DSM 2489 / 6091).